We begin with the raw amino-acid sequence, 60 residues long: Myrmicitoxin(1)-Pr4c (60 aa).

The signal sequence occupies residues 1-23 (MKAIIFLFAVLTVVAIIIPIISG). Residues 24–33 (EPNAGPHAAS) constitute a propeptide that is removed on maturation. Q59 is subject to Glutamine amide.

It belongs to the formicidae venom clade 2 family. Expressed by the venom gland.

It localises to the secreted. Its function is as follows. Toxin that causes a rapid and irreversible paralysis when intrathoracically injected into insects (blowflies). Does not cause spontaneous nocifensive behaviors by intraplantar injection in mice. In Pogonomyrmex rugosus (Desert harvester ant), this protein is Myrmicitoxin(1)-Pr4c.